A 100-amino-acid polypeptide reads, in one-letter code: NADH-quinone oxidoreductase subunit K (100 aa).

Transmembrane regions (helical) follow at residues 4 to 24, 28 to 48, and 60 to 80; these read LSHGLILAAILFVLGLTGMII, LLFMLLGLEIMINASALAFVV, and VMYILAVTLAAAEASIGLALL.

This sequence belongs to the complex I subunit 4L family. As to quaternary structure, NDH-1 is composed of 13 different subunits. Subunits NuoA, H, J, K, L, M, N constitute the membrane sector of the complex.

It is found in the cell inner membrane. The enzyme catalyses a quinone + NADH + 5 H(+)(in) = a quinol + NAD(+) + 4 H(+)(out). Its function is as follows. NDH-1 shuttles electrons from NADH, via FMN and iron-sulfur (Fe-S) centers, to quinones in the respiratory chain. The immediate electron acceptor for the enzyme in this species is believed to be ubiquinone. Couples the redox reaction to proton translocation (for every two electrons transferred, four hydrogen ions are translocated across the cytoplasmic membrane), and thus conserves the redox energy in a proton gradient. The protein is NADH-quinone oxidoreductase subunit K of Sodalis glossinidius (strain morsitans).